The following is a 51-amino-acid chain: Large ribosomal subunit protein eL39 (51 aa).

This sequence belongs to the eukaryotic ribosomal protein eL39 family.

In Drosophila melanogaster (Fruit fly), this protein is Large ribosomal subunit protein eL39 (RpL39).